The sequence spans 119 residues: Large ribosomal subunit protein bL19 (119 aa).

This sequence belongs to the bacterial ribosomal protein bL19 family.

This protein is located at the 30S-50S ribosomal subunit interface and may play a role in the structure and function of the aminoacyl-tRNA binding site. The polypeptide is Large ribosomal subunit protein bL19 (Sulfurovum sp. (strain NBC37-1)).